A 96-amino-acid chain; its full sequence is Small ribosomal subunit protein bS6 (96 aa).

Belongs to the bacterial ribosomal protein bS6 family.

Its function is as follows. Binds together with bS18 to 16S ribosomal RNA. The protein is Small ribosomal subunit protein bS6 of Beutenbergia cavernae (strain ATCC BAA-8 / DSM 12333 / CCUG 43141 / JCM 11478 / NBRC 16432 / NCIMB 13614 / HKI 0122).